The primary structure comprises 416 residues: MDLITLGKAAKDAAFQLATASTAQKNKALAIIADELEANAADILAANSKDIELGRQAGLSEAMLDRLLLNESRLNGIANDVRNVISLTDPVGSEIDSKVLENGMQLSRRRVPLGVVGVIYEARPNVTIDIAALCLKTGNASILRGGKETFFSNMELVKVIQSALAKAGLPAASVQYIEKPDRELVTQLLKLDDYVDMIIPRGGAGLHKMCKENSTIPVIIGGFGISHIFVDETADLAKSVDVVENAKAQRPSACNALDTLLVHERIAEQFLPMLVAKLNGKVTFVVEPKAKAYMTKAEQVRDASEGDFDTEWLSYTLGVKVVADVQEAIDHMREHNASHSDAIMTNHLQNAELFINSAGSAAVYVNASTRFTDGAQFGLGAEVAVSTQKLHARGPMGLEELTSYKWVGKANYLSRA.

Belongs to the gamma-glutamyl phosphate reductase family.

The protein resides in the cytoplasm. It catalyses the reaction L-glutamate 5-semialdehyde + phosphate + NADP(+) = L-glutamyl 5-phosphate + NADPH + H(+). Its pathway is amino-acid biosynthesis; L-proline biosynthesis; L-glutamate 5-semialdehyde from L-glutamate: step 2/2. Catalyzes the NADPH-dependent reduction of L-glutamate 5-phosphate into L-glutamate 5-semialdehyde and phosphate. The product spontaneously undergoes cyclization to form 1-pyrroline-5-carboxylate. In Vibrio vulnificus (strain YJ016), this protein is Gamma-glutamyl phosphate reductase.